Consider the following 458-residue polypeptide: Flavohemoprotein (458 aa).

Residues 2–158 (TLSEDTLRAV…LADLFIKREE (157 aa)) enclose the Globin domain. His-107 contributes to the heme b binding site. Residues Tyr-117 and Glu-157 each act as charge relay system in the active site. Positions 169-457 (GGWRQTRTFR…FEMFGPFKAS (289 aa)) are reductase. Positions 172-279 (RQTRTFRVEE…APPYGDFFLR (108 aa)) constitute an FAD-binding FR-type domain. Residues Tyr-211 and 228 to 231 (RQYS) contribute to the FAD site. Residue 321–326 (GIGQTP) coordinates NADP(+). Residue 450–453 (MFGP) participates in FAD binding.

Belongs to the globin family. Two-domain flavohemoproteins subfamily. The protein in the C-terminal section; belongs to the flavoprotein pyridine nucleotide cytochrome reductase family. Monomer. Requires heme b as cofactor. The cofactor is FAD.

The catalysed reaction is 2 nitric oxide + NADPH + 2 O2 = 2 nitrate + NADP(+) + H(+). The enzyme catalyses 2 nitric oxide + NADH + 2 O2 = 2 nitrate + NAD(+) + H(+). Functionally, flavohemoprotein involved in nitric oxide (NO) detoxification in an aerobic process, termed nitric oxide dioxygenase (NOD) reaction that utilizes O(2) and NAD(P)H to convert NO to nitrate, which protects the protozoan parasite from various noxious nitrogen compounds. Therefore, plays a central role in the inducible response to nitrosative stress. May also be involved in O(2) detoxification. The chain is Flavohemoprotein (hmpA) from Giardia intestinalis (strain ATCC 50803 / WB clone C6) (Giardia lamblia).